The sequence spans 636 residues: Chaperone protein DnaK (636 aa).

Thr-197 carries the post-translational modification Phosphothreonine; by autocatalysis. Residues 596 to 607 show a composition bias toward low complexity; it reads LYQQAQEQQQSG. Residues 596–636 are disordered; that stretch reads LYQQAQEQQQSGSSGGSSDEDVVEDAEIVDEEDEEKRDDNR. The segment covering 613-636 has biased composition (acidic residues); it reads SDEDVVEDAEIVDEEDEEKRDDNR.

The protein belongs to the heat shock protein 70 family.

Functionally, acts as a chaperone. The sequence is that of Chaperone protein DnaK from Rubrobacter xylanophilus (strain DSM 9941 / JCM 11954 / NBRC 16129 / PRD-1).